We begin with the raw amino-acid sequence, 335 residues long: Protein-arginine kinase (335 aa).

The 224-residue stretch at 21–244 folds into the Phosphagen kinase C-terminal domain; sequence IVMSSRIRLA…NQIIHEEKQI (224 aa). Residues 24–28, H82, R115, 166–170, and 197–202 contribute to the ATP site; these read SSRIR, RASVM, and RGIYGE.

It belongs to the ATP:guanido phosphotransferase family.

The catalysed reaction is L-arginyl-[protein] + ATP = N(omega)-phospho-L-arginyl-[protein] + ADP + H(+). In terms of biological role, catalyzes the specific phosphorylation of arginine residues in proteins. This chain is Protein-arginine kinase, found in Staphylococcus aureus (strain USA300).